A 356-amino-acid chain; its full sequence is MGANVLIMAGGTGGHVFPALACAREFQARGYTVHWLGTPRGIENDLVPAAGLPLHLINVSGLRGKGKLSLLKAPFVLIKAVLQARRVIRQLKPVCVLGFGGYVTGPGGVAAKLSGVPVIVHEQNAVAGTANRLLVPLAARVCEAFPDTFGASQSRRTTGNPVRTELFLETPREALAGRKARLLILGGSLGAEPLNKLLPEALAQVAPELRPEVFHQAGKNHDEVTAERYRAAGVEAQVQPFIKDMAQAYGWADLVVCRAGALTVSELAAAGLPSMLVPLPHAIDDHQTRNAEYLAREGAAFLMPQRTTGAADLAARLTEVLMQPERLDNMAQAARRLAKPGATHDVVNICLEVAHG.

Residues 12–14, N124, R163, S188, I242, 261–266, and Q287 contribute to the UDP-N-acetyl-alpha-D-glucosamine site; these read TGG and ALTVSE.

This sequence belongs to the glycosyltransferase 28 family. MurG subfamily.

The protein localises to the cell inner membrane. It carries out the reaction di-trans,octa-cis-undecaprenyl diphospho-N-acetyl-alpha-D-muramoyl-L-alanyl-D-glutamyl-meso-2,6-diaminopimeloyl-D-alanyl-D-alanine + UDP-N-acetyl-alpha-D-glucosamine = di-trans,octa-cis-undecaprenyl diphospho-[N-acetyl-alpha-D-glucosaminyl-(1-&gt;4)]-N-acetyl-alpha-D-muramoyl-L-alanyl-D-glutamyl-meso-2,6-diaminopimeloyl-D-alanyl-D-alanine + UDP + H(+). It participates in cell wall biogenesis; peptidoglycan biosynthesis. Functionally, cell wall formation. Catalyzes the transfer of a GlcNAc subunit on undecaprenyl-pyrophosphoryl-MurNAc-pentapeptide (lipid intermediate I) to form undecaprenyl-pyrophosphoryl-MurNAc-(pentapeptide)GlcNAc (lipid intermediate II). This is UDP-N-acetylglucosamine--N-acetylmuramyl-(pentapeptide) pyrophosphoryl-undecaprenol N-acetylglucosamine transferase from Pseudomonas fluorescens (strain ATCC BAA-477 / NRRL B-23932 / Pf-5).